Consider the following 499-residue polypeptide: Gypsy retrotransposon integrase-like protein 1 (499 aa).

In terms of domain architecture, Integrase catalytic spans 113 to 270; sequence KVENPWSIVT…TPYFQMFNRN (158 aa).

The sequence is that of Gypsy retrotransposon integrase-like protein 1 (GIN1) from Bos taurus (Bovine).